Consider the following 583-residue polypeptide: Protein NRT1/ PTR FAMILY 5.1 (583 aa).

Residues 74–94 (WSGAVWITPIAGAYIADSYIG) traverse the membrane as a helical segment. The residue at position 98 (threonine 98) is a Phosphothreonine. Transmembrane regions (helical) follow at residues 99 to 119 (FTAS…AVTV), 134 to 154 (ASSL…IGAG), 182 to 202 (FFNW…LGLV), 210 to 230 (WGLG…VFYI), 320 to 340 (VLGL…WAQV), 361 to 381 (IPAA…VPMY), 405 to 425 (LGVG…VEVK), 446 to 466 (IFWL…NAIG), 485 to 505 (TFFT…VTMI), and 529 to 549 (YYYG…VWAA).

The protein belongs to the major facilitator superfamily. Proton-dependent oligopeptide transporter (POT/PTR) (TC 2.A.17) family. As to expression, expressed in flowers. Detected in stems, leaves and siliques.

Its subcellular location is the membrane. The sequence is that of Protein NRT1/ PTR FAMILY 5.1 (NPF5.1) from Arabidopsis thaliana (Mouse-ear cress).